The chain runs to 312 residues: NAD-dependent protein deacylase Sirt4 (312 aa).

A mitochondrion-targeting transit peptide spans 1-16 (MRVGQLLRFRSTSLRS). Positions 28 to 312 (KPVVEDDIKR…FDFRNSKSVS (285 aa)) constitute a Deacetylase sirtuin-type domain. Residues 53–73 (GAGI…VGLY) and 134–137 (QNVD) contribute to the NAD(+) site. The active-site Proton acceptor is His152. Positions 160, 163, 211, and 214 each coordinate Zn(2+). Residues 251-253 (GSS), 277-279 (NIG), and Cys295 contribute to the NAD(+) site.

The protein belongs to the sirtuin family. Class II subfamily. Zn(2+) serves as cofactor.

It localises to the mitochondrion matrix. It catalyses the reaction N(6)-acetyl-L-lysyl-[protein] + NAD(+) + H2O = 2''-O-acetyl-ADP-D-ribose + nicotinamide + L-lysyl-[protein]. Its function is as follows. NAD-dependent protein deacylase. Catalyzes the NAD-dependent hydrolysis of acyl groups from lysine residues. In Drosophila melanogaster (Fruit fly), this protein is NAD-dependent protein deacylase Sirt4 (Sirt4).